We begin with the raw amino-acid sequence, 294 residues long: Bifunctional protein FolD (294 aa).

NADP(+) is bound by residues glycine 166–serine 168, serine 191, and isoleucine 232.

This sequence belongs to the tetrahydrofolate dehydrogenase/cyclohydrolase family. As to quaternary structure, homodimer.

It catalyses the reaction (6R)-5,10-methylene-5,6,7,8-tetrahydrofolate + NADP(+) = (6R)-5,10-methenyltetrahydrofolate + NADPH. The catalysed reaction is (6R)-5,10-methenyltetrahydrofolate + H2O = (6R)-10-formyltetrahydrofolate + H(+). It functions in the pathway one-carbon metabolism; tetrahydrofolate interconversion. Functionally, catalyzes the oxidation of 5,10-methylenetetrahydrofolate to 5,10-methenyltetrahydrofolate and then the hydrolysis of 5,10-methenyltetrahydrofolate to 10-formyltetrahydrofolate. The protein is Bifunctional protein FolD of Nitrobacter winogradskyi (strain ATCC 25391 / DSM 10237 / CIP 104748 / NCIMB 11846 / Nb-255).